A 146-amino-acid chain; its full sequence is Probable actin-related protein 2/3 complex subunit 5 (146 aa).

Belongs to the ARPC5 family. In terms of assembly, component of the Arp2/3 complex composed of ARP2, ARP3, ARPC1B/p41-ARC, ARPC2/p34-ARC, ARPC3/p21-ARC, ARPC4/p20-ARC and ARPC5/p16-ARC.

The protein resides in the cytoplasm. It localises to the cytoskeleton. In terms of biological role, functions as a component of the Arp2/3 complex which is involved in regulation of actin polymerization and together with an activating nucleation-promoting factor (NPF) mediates the formation of branched actin networks. This chain is Probable actin-related protein 2/3 complex subunit 5, found in Caenorhabditis elegans.